The chain runs to 768 residues: MPYTLEDLKAHGLSPAEYQQIQQQLGRDPNPNELAMFGVMWSEHCCYKNSRPLLKNFPTTGERVVVGPGENAGVVDLGEGDWLAFKIESHNHPSAVEPFQGAATGVGGILRDIFTLGARPIALLNSLRFGPLTDPRNRRLMARVVEGIAHYGNCVGVPTVGGEVAVDPCYSGNPLVNVMALGLLETPAVVKSAARGVGNPVLYVGATTGRDGIRGASFASAELKEDAQQDRPAVQVGDPFLGKCLIEACLEAFATGAVVAAQDMGAAGITCSTAEMAAKGGVGIRFDLDRVPARESGMAAWEYLLSESQERMLLVVQKGREAEVMEIFHRWGLQASVAGEVIAEPLVEIWHQGSCVVQVPVRALAEDTPVYVRPVLPEPPAYVQAAWQWDPATLPPCDCQGIHLAQATLAWKEVLLQLLASPTLASKAWIYRQYDHQVQNNTVLWPGQGDAAVIRIRSQRFGVGEVPPLRASRKAIAATLDGNGRWVYLDPYEGAKAAVAEAARNLTCVGADPLAVTDNLNFGNPENPVVYWQLALACRGIGDACRALGTPVTGGNVSLYNETLTPQGSQAIYPTPVIGMVGLIPDLKCICGQGWQQEGDLIYLLGSQALTSLGGSEYLAVIHQQVTGRPAPVDLELEKRVQAACRHGIRQGWVRSAHDCSEGGLAVALAEACLSGGRGATLSLAPGSLRWDQALFGEGSSRILVSVDPAQRSAWEAYLEAQLAGQWQLLGEVGSPADPLLLRTAEEDPLLVVSLAAMQAAYHGAFSD.

The active site involves H44. The ATP site is built by Y47 and K86. E88 lines the Mg(2+) pocket. Residues 89 to 92 (SHNH) and R111 contribute to the substrate site. H90 functions as the Proton acceptor in the catalytic mechanism. Mg(2+) is bound at residue D112. Q235 provides a ligand contact to substrate. Mg(2+) is bound at residue D263. Substrate is bound at residue 307-309 (ESQ). Residues D518 and G555 each coordinate ATP. N556 lines the Mg(2+) pocket. Substrate is bound at residue S558.

It belongs to the FGAMS family. In terms of assembly, monomer. Part of the FGAM synthase complex composed of 1 PurL, 1 PurQ and 2 PurS subunits.

The protein resides in the cytoplasm. The enzyme catalyses N(2)-formyl-N(1)-(5-phospho-beta-D-ribosyl)glycinamide + L-glutamine + ATP + H2O = 2-formamido-N(1)-(5-O-phospho-beta-D-ribosyl)acetamidine + L-glutamate + ADP + phosphate + H(+). The protein operates within purine metabolism; IMP biosynthesis via de novo pathway; 5-amino-1-(5-phospho-D-ribosyl)imidazole from N(2)-formyl-N(1)-(5-phospho-D-ribosyl)glycinamide: step 1/2. Its function is as follows. Part of the phosphoribosylformylglycinamidine synthase complex involved in the purines biosynthetic pathway. Catalyzes the ATP-dependent conversion of formylglycinamide ribonucleotide (FGAR) and glutamine to yield formylglycinamidine ribonucleotide (FGAM) and glutamate. The FGAM synthase complex is composed of three subunits. PurQ produces an ammonia molecule by converting glutamine to glutamate. PurL transfers the ammonia molecule to FGAR to form FGAM in an ATP-dependent manner. PurS interacts with PurQ and PurL and is thought to assist in the transfer of the ammonia molecule from PurQ to PurL. In Synechococcus sp. (strain JA-2-3B'a(2-13)) (Cyanobacteria bacterium Yellowstone B-Prime), this protein is Phosphoribosylformylglycinamidine synthase subunit PurL.